The following is a 139-amino-acid chain: Histone H2B.11 (139 aa).

Basic and acidic residues predominate over residues 1–39 (MAPKAEKKPAEKKPVEEKAEKKPKAEKRVPGAKEGGGEK). The disordered stretch occupies residues 1-47 (MAPKAEKKPAEKKPVEEKAEKKPKAEKRVPGAKEGGGEKKGKKKAKK). 2 positions are modified to N6-acetyllysine: K7 and K27. K135 participates in a covalent cross-link: Glycyl lysine isopeptide (Lys-Gly) (interchain with G-Cter in ubiquitin).

Belongs to the histone H2B family. The nucleosome is a histone octamer containing two molecules each of H2A, H2B, H3 and H4 assembled in one H3-H4 heterotetramer and two H2A-H2B heterodimers. The octamer wraps approximately 147 bp of DNA. Post-translationally, can be acetylated to form H2BK6ac and H2BK33ac. In terms of processing, monoubiquitinated by BRE1 to form H2BK143ub1 and deubiquitinated by UBP26. Required for heterochromatic histone H3 di- and trimethylation at H3K4me. May give a specific tag for epigenetic transcriptional activation.

The protein localises to the nucleus. It is found in the chromosome. In terms of biological role, core component of nucleosome. Nucleosomes wrap and compact DNA into chromatin, limiting DNA accessibility to the cellular machineries which require DNA as a template. Histones thereby play a central role in transcription regulation, DNA repair, DNA replication and chromosomal stability. DNA accessibility is regulated via a complex set of post-translational modifications of histones, also called histone code, and nucleosome remodeling. In Oryza sativa subsp. indica (Rice), this protein is Histone H2B.11 (H2B.11).